Consider the following 352-residue polypeptide: MSKNLTGVGGSLPVENVQVLAGKELKNLPNRYVRPELEHDDVVPIDNSLEIPVIDLSRLLDQQYACDELAKFHSACLDWGFFQLINHGVREEVIEKMKVDTEDFFRLPFKEKNAYRQLPNGMEGYGQAFVTSEEQKLDWADMHFLITKPVQERNMRFWPTSPTSFRETMEKYSMELQKVAMCLTGMMAKNLGLESEILTKPLRTVFNREDELLPSMSSCGEGLGLSPHSDATGLTLLIQVNEVNGLHIKKDEKWVPIKPILGAFVVNIGDVIEIMSNGIYKSIEHRAVINTDKERLSIAAFHDPEYGTKIGPLPDLVKENGVKYKTIDYEDYLIRSSNIKLDGKSLLDQMKL.

Residues 200 to 304 (KPLRTVFNRE…RLSIAAFHDP (105 aa)) form the Fe2OG dioxygenase domain. The Fe cation site is built by histidine 228, aspartate 230, and histidine 285.

This sequence belongs to the iron/ascorbate-dependent oxidoreductase family. As to quaternary structure, monomer. It depends on Fe cation as a cofactor.

It catalyses the reaction (4-hydroxyphenyl)acetaldehyde + dopamine = (S)-norcoclaurine + H2O. Inhibited by O-phenanthroline, but not by EDTA. Functionally, involved in the biosynthesis of the common precursor of all benzylisoquinoline alkaloids such as morphine, sanguinarine, codeine or berberine. Condenses dopamine and phenylacetaldehyde, 3,4-dihydrophenylacetaldehyde or 4-hydroxyphenylacetaldehyde. This chain is S-norcoclaurine synthase 1 (NCS1), found in Coptis japonica (Japanese goldthread).